A 408-amino-acid chain; its full sequence is Acetate kinase (408 aa).

Residue asparagine 7 participates in Mg(2+) binding. Lysine 14 contacts ATP. Arginine 91 serves as a coordination point for substrate. The Proton donor/acceptor role is filled by aspartate 148. ATP-binding positions include 208–212, 283–285, and 331–335; these read HLGNG, DFR, and GIGEN. Residue glutamate 384 participates in Mg(2+) binding.

Belongs to the acetokinase family. Homodimer. The cofactor is Mg(2+). Mn(2+) is required as a cofactor.

The protein localises to the cytoplasm. The catalysed reaction is acetate + ATP = acetyl phosphate + ADP. It participates in metabolic intermediate biosynthesis; acetyl-CoA biosynthesis; acetyl-CoA from acetate: step 1/2. Functionally, catalyzes the formation of acetyl phosphate from acetate and ATP. Can also catalyze the reverse reaction. In Methanosarcina acetivorans (strain ATCC 35395 / DSM 2834 / JCM 12185 / C2A), this protein is Acetate kinase.